A 122-amino-acid chain; its full sequence is Large ribosomal subunit protein uL14 (122 aa).

The protein belongs to the universal ribosomal protein uL14 family. Part of the 50S ribosomal subunit. Forms a cluster with proteins L3 and L19. In the 70S ribosome, L14 and L19 interact and together make contacts with the 16S rRNA in bridges B5 and B8.

In terms of biological role, binds to 23S rRNA. Forms part of two intersubunit bridges in the 70S ribosome. This is Large ribosomal subunit protein uL14 from Renibacterium salmoninarum (strain ATCC 33209 / DSM 20767 / JCM 11484 / NBRC 15589 / NCIMB 2235).